Reading from the N-terminus, the 146-residue chain is Interleukin-13 (146 aa).

Positions 1 to 24 (MHPLLNPLLLALGLMALLLTTVIA) are cleaved as a signal peptide. Asparagine 52, asparagine 63, asparagine 71, and asparagine 86 each carry an N-linked (GlcNAc...) asparagine glycan. Disulfide bonds link cysteine 62/cysteine 90 and cysteine 78/cysteine 104.

The protein belongs to the IL-4/IL-13 family. Interacts with IL13RA2.

The protein localises to the secreted. Its function is as follows. Cytokine that plays important roles in allergic inflammation and immune response to parasite infection. Synergizes with IL2 in regulating interferon-gamma synthesis. Stimulates B-cell proliferation, and activation of eosinophils, basophils, and mast cells. Plays an important role in controlling IL33 activity by modulating the production of transmembrane and soluble forms of interleukin-1 receptor-like 1/IL1RL1. Displays the capacity to antagonize Th1-driven proinflammatory immune response and downregulates synthesis of many proinflammatory cytokines including IL1, IL6, IL10, IL12 and TNF-alpha through a mechanism that partially involves suppression of NF-kappa-B. Also functions on nonhematopoietic cells, including endothelial cells where it induces vascular cell adhesion protein 1/VCAM1, which is important in the recruitment of eosinophils. Exerts its biological effects through its receptors which comprises the IL4R chain and the IL13RA1 chain, to activate JAK1 and TYK2, leading to the activation of STAT6. Aside from IL13RA1, another receptor IL13RA2 acts as a high affinity decoy for IL13 and mediates internalization and depletion of extracellular IL13. The sequence is that of Interleukin-13 (IL13) from Homo sapiens (Human).